Reading from the N-terminus, the 274-residue chain is Orotidine 5'-phosphate decarboxylase (274 aa).

The active-site Proton donor is Lys-95.

Belongs to the OMP decarboxylase family. Type 2 subfamily.

The catalysed reaction is orotidine 5'-phosphate + H(+) = UMP + CO2. It functions in the pathway pyrimidine metabolism; UMP biosynthesis via de novo pathway; UMP from orotate: step 2/2. In Paracidovorax citrulli (strain AAC00-1) (Acidovorax citrulli), this protein is Orotidine 5'-phosphate decarboxylase.